Consider the following 488-residue polypeptide: Protein nucleotidyltransferase YdiU (488 aa).

Residues Gly91, Gly93, Arg94, Lys114, Asp126, Gly127, Arg177, and Arg184 each coordinate ATP. Asp253 serves as the catalytic Proton acceptor. The Mg(2+) site is built by Asn254 and Asp263. Asp263 contacts ATP.

Belongs to the SELO family. Mg(2+) serves as cofactor. Mn(2+) is required as a cofactor.

It carries out the reaction L-seryl-[protein] + ATP = 3-O-(5'-adenylyl)-L-seryl-[protein] + diphosphate. The catalysed reaction is L-threonyl-[protein] + ATP = 3-O-(5'-adenylyl)-L-threonyl-[protein] + diphosphate. It catalyses the reaction L-tyrosyl-[protein] + ATP = O-(5'-adenylyl)-L-tyrosyl-[protein] + diphosphate. The enzyme catalyses L-histidyl-[protein] + UTP = N(tele)-(5'-uridylyl)-L-histidyl-[protein] + diphosphate. It carries out the reaction L-seryl-[protein] + UTP = O-(5'-uridylyl)-L-seryl-[protein] + diphosphate. The catalysed reaction is L-tyrosyl-[protein] + UTP = O-(5'-uridylyl)-L-tyrosyl-[protein] + diphosphate. Nucleotidyltransferase involved in the post-translational modification of proteins. It can catalyze the addition of adenosine monophosphate (AMP) or uridine monophosphate (UMP) to a protein, resulting in modifications known as AMPylation and UMPylation. The protein is Protein nucleotidyltransferase YdiU of Bacillus cereus (strain ATCC 10987 / NRS 248).